The primary structure comprises 815 residues: ABC transporter G family member 7 (815 aa).

Disordered stretches follow at residues 81 to 141 and 177 to 249; these read NNID…TPNF and KQIK…TNGK. Positions 164–199 form a coiled coil; it reads ENISYKTENRNYKKQIKDEKKRKKKLEMERSNSSNS. Residues 194–210 show a composition bias toward low complexity; it reads SNSSNSNSSYDVESSAS. A compositionally biased stretch (polar residues) spans 211–248; it reads GLQTPQQSRSSILPTNSLNISKIDQSMNPQQTRSTTNG. The region spanning 242–485 is the ABC transporter domain; it reads TRSTTNGKIE…SLPNQYQCPN (244 aa). 274 to 281 provides a ligand contact to ATP; the sequence is GPSGSGKS. The ABC transmembrane type-2 domain occupies 562-810; the sequence is TQYITRLSGG…VSGYWAISKL (249 aa). Helical transmembrane passes span 568-588, 598-618, 647-667, 675-695, 706-726, 732-752, and 788-808; these read LSGGFMIGLLFSACFGTLSPS, ILFFLIAVLNLIPFTCITLFL, AFIQFLVSLIVSLLVYTINHL, FITYFILYLINLLSDLYIIAI, FIYGTTISITFLLFMGHLVPV, SFGWIHWLNPLYYGYATVMVA, and GIGIIILWICFFFVSGYWAIS.

Belongs to the ABC transporter superfamily. ABCG family.

The protein localises to the membrane. The chain is ABC transporter G family member 7 (abcG7) from Dictyostelium discoideum (Social amoeba).